The chain runs to 291 residues: Phosphatidylglycerol--prolipoprotein diacylglyceryl transferase (291 aa).

7 consecutive transmembrane segments (helical) span residues 21 to 41 (VALHWYGLMYLVGFVFAMWLA), 60 to 80 (LLYAGFLGVFLGGRIGYVLFY), 96 to 116 (WDGGMSFHGGLIGVILVMIIF), 130 to 150 (FIAPLIPFGLGAGRLGNFING), 198 to 218 (SQLYELALEGVVLFIILNLFI), 225 to 245 (GAVSGLFLIGYGAFRIIVEFF), and 260 to 280 (ISMGQILSIPMIIAGAIMMVW). Residue Arg143 coordinates a 1,2-diacyl-sn-glycero-3-phospho-(1'-sn-glycerol).

This sequence belongs to the Lgt family.

It localises to the cell inner membrane. The enzyme catalyses L-cysteinyl-[prolipoprotein] + a 1,2-diacyl-sn-glycero-3-phospho-(1'-sn-glycerol) = an S-1,2-diacyl-sn-glyceryl-L-cysteinyl-[prolipoprotein] + sn-glycerol 1-phosphate + H(+). It participates in protein modification; lipoprotein biosynthesis (diacylglyceryl transfer). Catalyzes the transfer of the diacylglyceryl group from phosphatidylglycerol to the sulfhydryl group of the N-terminal cysteine of a prolipoprotein, the first step in the formation of mature lipoproteins. In Salmonella agona (strain SL483), this protein is Phosphatidylglycerol--prolipoprotein diacylglyceryl transferase.